Consider the following 298-residue polypeptide: uncharacterized protein (298 aa).

It is found in the cytoplasm. The protein localises to the nucleus. This is an uncharacterized protein from Schizosaccharomyces pombe (strain 972 / ATCC 24843) (Fission yeast).